A 319-amino-acid polypeptide reads, in one-letter code: ATP-dependent 6-phosphofructokinase (319 aa).

ATP is bound at residue Gly-11. 21–25 (RAVVR) is an ADP binding site. Residues 72-73 (RC) and 102-105 (GDGS) each bind ATP. Position 103 (Asp-103) interacts with Mg(2+). 125-127 (TID) lines the substrate pocket. The active-site Proton acceptor is the Asp-127. Arg-154 is an ADP binding site. 169–171 (MGR) contacts substrate. ADP is bound by residues 185–187 (GAE), Arg-211, and 213–215 (KKH). Residues Glu-222, Arg-243, and 249 to 252 (HIQR) contribute to the substrate site.

The protein belongs to the phosphofructokinase type A (PFKA) family. ATP-dependent PFK group I subfamily. Prokaryotic clade 'B1' sub-subfamily. Homotetramer. It depends on Mg(2+) as a cofactor.

It localises to the cytoplasm. It carries out the reaction beta-D-fructose 6-phosphate + ATP = beta-D-fructose 1,6-bisphosphate + ADP + H(+). It participates in carbohydrate degradation; glycolysis; D-glyceraldehyde 3-phosphate and glycerone phosphate from D-glucose: step 3/4. Allosterically activated by ADP and other diphosphonucleosides, and allosterically inhibited by phosphoenolpyruvate. Catalyzes the phosphorylation of D-fructose 6-phosphate to fructose 1,6-bisphosphate by ATP, the first committing step of glycolysis. The polypeptide is ATP-dependent 6-phosphofructokinase (Lysinibacillus sphaericus (Bacillus sphaericus)).